The primary structure comprises 61 residues: Large ribosomal subunit protein uL30 (61 aa).

It belongs to the universal ribosomal protein uL30 family. Part of the 50S ribosomal subunit.

In Chlorobium phaeobacteroides (strain BS1), this protein is Large ribosomal subunit protein uL30.